Here is a 707-residue protein sequence, read N- to C-terminus: Protein kinase C theta type (707 aa).

The region spanning 1–107 is the C2 domain; it reads MSPFLRIGLS…KNNGRTEIWL (107 aa). Position 90 is a phosphotyrosine; by LCK (Tyr-90). Residues 159 to 209 form a Phorbol-ester/DAG-type 1 zinc finger; the sequence is CHEFTATFFPQPTFCSVCHEFVWGLNKQGYQCRRCNAAIHKKCIDKVIAKC. Thr-219 bears the Phosphothreonine; by autocatalysis mark. The Phorbol-ester/DAG-type 2 zinc-finger motif lies at 231–281; sequence PHRFKVYNYKSPTFCEHCGTLLWGLARQGLKCDACGMNVHHRCQTKVANLC. Residue Ser-348 is modified to Phosphoserine. The 255-residue stretch at 380 to 634 folds into the Protein kinase domain; that stretch reads FILHKMLGKG…RGDIRQHPLF (255 aa). ATP-binding positions include 386 to 394 and Lys-409; that span reads LGKGSFGKV. Residue Asp-504 is the Proton acceptor of the active site. Thr-538 carries the post-translational modification Phosphothreonine; by PDPK1. An AGC-kinase C-terminal domain is found at 635–706; it reads REINWEELER…INPGMETLIC (72 aa). Ser-676 and Ser-685 each carry phosphoserine. Ser-695 carries the post-translational modification Phosphoserine; by autocatalysis.

The protein belongs to the protein kinase superfamily. AGC Ser/Thr protein kinase family. PKC subfamily. As to quaternary structure, part of a membrane raft complex composed at least of BCL10, CARD11, MALT1 and IKBKB. Interacts with GLRX3 (via N-terminus). Interacts with ECT2. Interacts with CCDC88A/GIV; the interaction leads to phosphorylation of CCDC88A and inhibition of its guanine nucleotide exchange factor activity. Interacts with CD28. The cofactor is Mg(2+). In terms of processing, autophosphorylation at Thr-219 is required for targeting to the TCR and cellular function of PRKCQ upon antigen receptor ligation. Following TCR stimulation, phosphorylated at Tyr-90 and Ser-685.

It is found in the cytoplasm. The protein localises to the cell membrane. The catalysed reaction is L-seryl-[protein] + ATP = O-phospho-L-seryl-[protein] + ADP + H(+). It carries out the reaction L-threonyl-[protein] + ATP = O-phospho-L-threonyl-[protein] + ADP + H(+). With respect to regulation, novel PKCs (PRKCD, PRKCE, PRKCH and PRKCQ) are calcium-insensitive, but activated by diacylglycerol (DAG) and phosphatidylserine. Three specific sites; Thr-538 (activation loop of the kinase domain), Ser-676 (turn motif) and Ser-695 (hydrophobic region), need to be phosphorylated for its full activation. Calcium-independent, phospholipid- and diacylglycerol (DAG)-dependent serine/threonine-protein kinase that mediates non-redundant functions in T-cell receptor (TCR) signaling, including T-cells activation, proliferation, differentiation and survival, by mediating activation of multiple transcription factors such as NF-kappa-B, JUN, NFATC1 and NFATC2. In TCR-CD3/CD28-co-stimulated T-cells, is required for the activation of NF-kappa-B and JUN, which in turn are essential for IL2 production, and participates in the calcium-dependent NFATC1 and NFATC2 transactivation. Mediates the activation of the canonical NF-kappa-B pathway (NFKB1) by direct phosphorylation of CARD11 on several serine residues, inducing CARD11 association with lipid rafts and recruitment of the BCL10-MALT1 complex, which then activates IKK complex, resulting in nuclear translocation and activation of NFKB1. May also play an indirect role in activation of the non-canonical NF-kappa-B (NFKB2) pathway. In the signaling pathway leading to JUN activation, acts by phosphorylating the mediator STK39/SPAK and may not act through MAP kinases signaling. Plays a critical role in TCR/CD28-induced NFATC1 and NFATC2 transactivation by participating in the regulation of reduced inositol 1,4,5-trisphosphate generation and intracellular calcium mobilization. After costimulation of T-cells through CD28 can phosphorylate CBLB and is required for the ubiquitination and subsequent degradation of CBLB, which is a prerequisite for the activation of TCR. During T-cells differentiation, plays an important role in the development of T-helper 2 (Th2) cells following immune and inflammatory responses, and, in the development of inflammatory autoimmune diseases, is necessary for the activation of IL17-producing Th17 cells. May play a minor role in Th1 response. Upon TCR stimulation, mediates T-cell protective survival signal by phosphorylating BAD, thus protecting T-cells from BAD-induced apoptosis, and by up-regulating BCL-X(L)/BCL2L1 levels through NF-kappa-B and JUN pathways. In platelets, regulates signal transduction downstream of the ITGA2B, CD36/GP4, F2R/PAR1 and F2RL3/PAR4 receptors, playing a positive role in 'outside-in' signaling and granule secretion signal transduction. May relay signals from the activated ITGA2B receptor by regulating the uncoupling of WASP and WIPF1, thereby permitting the regulation of actin filament nucleation and branching activity of the Arp2/3 complex. May mediate inhibitory effects of free fatty acids on insulin signaling by phosphorylating IRS1, which in turn blocks IRS1 tyrosine phosphorylation and downstream activation of the PI3K/AKT pathway. Phosphorylates MSN (moesin) in the presence of phosphatidylglycerol or phosphatidylinositol. Phosphorylates PDPK1 at 'Ser-504' and 'Ser-532' and negatively regulates its ability to phosphorylate PKB/AKT1. Phosphorylates CCDC88A/GIV and inhibits its guanine nucleotide exchange factor activity. Phosphorylates and activates LRRK1, which phosphorylates RAB proteins involved in intracellular trafficking. The sequence is that of Protein kinase C theta type (Prkcq) from Rattus norvegicus (Rat).